The sequence spans 348 residues: Ribosomal RNA small subunit methyltransferase C (348 aa).

This sequence belongs to the methyltransferase superfamily. RsmC family. As to quaternary structure, monomer.

It is found in the cytoplasm. The enzyme catalyses guanosine(1207) in 16S rRNA + S-adenosyl-L-methionine = N(2)-methylguanosine(1207) in 16S rRNA + S-adenosyl-L-homocysteine + H(+). Specifically methylates the guanine in position 1207 of 16S rRNA in the 30S particle. In Pectobacterium atrosepticum (strain SCRI 1043 / ATCC BAA-672) (Erwinia carotovora subsp. atroseptica), this protein is Ribosomal RNA small subunit methyltransferase C.